The chain runs to 346 residues: Probable dual-specificity RNA methyltransferase RlmN (346 aa).

Glu-90 functions as the Proton acceptor in the catalytic mechanism. The Radical SAM core domain occupies 96-330 (TRDRLTVCVS…VSVRASRGLD (235 aa)). Cys-103 and Cys-335 are joined by a disulfide. [4Fe-4S] cluster contacts are provided by Cys-110, Cys-114, and Cys-117. Residues 157–158 (GE), Ser-187, 216–218 (SLH), and Asn-292 each bind S-adenosyl-L-methionine. Cys-335 functions as the S-methylcysteine intermediate in the catalytic mechanism.

Belongs to the radical SAM superfamily. RlmN family. [4Fe-4S] cluster serves as cofactor.

It localises to the cytoplasm. The catalysed reaction is adenosine(2503) in 23S rRNA + 2 reduced [2Fe-2S]-[ferredoxin] + 2 S-adenosyl-L-methionine = 2-methyladenosine(2503) in 23S rRNA + 5'-deoxyadenosine + L-methionine + 2 oxidized [2Fe-2S]-[ferredoxin] + S-adenosyl-L-homocysteine. It catalyses the reaction adenosine(37) in tRNA + 2 reduced [2Fe-2S]-[ferredoxin] + 2 S-adenosyl-L-methionine = 2-methyladenosine(37) in tRNA + 5'-deoxyadenosine + L-methionine + 2 oxidized [2Fe-2S]-[ferredoxin] + S-adenosyl-L-homocysteine. Specifically methylates position 2 of adenine 2503 in 23S rRNA and position 2 of adenine 37 in tRNAs. In Synechococcus sp. (strain RCC307), this protein is Probable dual-specificity RNA methyltransferase RlmN.